The sequence spans 438 residues: UDP-N-acetylmuramoylalanine--D-glutamate ligase (438 aa).

Position 112-118 (112-118) interacts with ATP; that stretch reads GSNGKST.

This sequence belongs to the MurCDEF family.

It is found in the cytoplasm. The enzyme catalyses UDP-N-acetyl-alpha-D-muramoyl-L-alanine + D-glutamate + ATP = UDP-N-acetyl-alpha-D-muramoyl-L-alanyl-D-glutamate + ADP + phosphate + H(+). It functions in the pathway cell wall biogenesis; peptidoglycan biosynthesis. In terms of biological role, cell wall formation. Catalyzes the addition of glutamate to the nucleotide precursor UDP-N-acetylmuramoyl-L-alanine (UMA). The chain is UDP-N-acetylmuramoylalanine--D-glutamate ligase from Salmonella typhi.